Consider the following 155-residue polypeptide: 3-hydroxyacyl-[acyl-carrier-protein] dehydratase FabZ (155 aa).

Residue His58 is part of the active site.

The protein belongs to the thioester dehydratase family. FabZ subfamily.

It localises to the cytoplasm. The enzyme catalyses a (3R)-hydroxyacyl-[ACP] = a (2E)-enoyl-[ACP] + H2O. Functionally, involved in unsaturated fatty acids biosynthesis. Catalyzes the dehydration of short chain beta-hydroxyacyl-ACPs and long chain saturated and unsaturated beta-hydroxyacyl-ACPs. The sequence is that of 3-hydroxyacyl-[acyl-carrier-protein] dehydratase FabZ from Rhizobium etli (strain CIAT 652).